Here is a 216-residue protein sequence, read N- to C-terminus: Protein Syd (216 aa).

Belongs to the Syd family.

It is found in the cell inner membrane. Functionally, interacts with the SecY protein in vivo. May bind preferentially to an uncomplexed state of SecY, thus functioning either as a chelating agent for excess SecY in the cell or as a regulatory factor that negatively controls the translocase function. The sequence is that of Protein Syd from Shewanella sp. (strain MR-4).